Consider the following 421-residue polypeptide: Type II methyltransferase M.TaqI (421 aa).

Positions 1–18 are enriched in low complexity; the sequence is MGLPPLLSLPSNSAPRSL. The interval 1-20 is disordered; sequence MGLPPLLSLPSNSAPRSLGR. S-adenosyl-L-methionine-binding positions include T23, 45–48, E71, D89, and P107; that span reads EPAC.

Belongs to the N(4)/N(6)-methyltransferase family.

The catalysed reaction is a 2'-deoxyadenosine in DNA + S-adenosyl-L-methionine = an N(6)-methyl-2'-deoxyadenosine in DNA + S-adenosyl-L-homocysteine + H(+). In terms of biological role, a gamma subtype methylase that recognizes the double-stranded sequence 5'-TCGA-3', methylates A-4 on both strands and protects the DNA from cleavage by the TaqI endonuclease. The chain is Type II methyltransferase M.TaqI (taqIM) from Thermus aquaticus.